A 206-amino-acid polypeptide reads, in one-letter code: Small ribosomal subunit protein uS4 (206 aa).

One can recognise an S4 RNA-binding domain in the interval Thr96 to Lys156.

The protein belongs to the universal ribosomal protein uS4 family. Part of the 30S ribosomal subunit. Contacts protein S5. The interaction surface between S4 and S5 is involved in control of translational fidelity.

Functionally, one of the primary rRNA binding proteins, it binds directly to 16S rRNA where it nucleates assembly of the body of the 30S subunit. Its function is as follows. With S5 and S12 plays an important role in translational accuracy. The polypeptide is Small ribosomal subunit protein uS4 (Shewanella sp. (strain ANA-3)).